The sequence spans 95 residues: Aspartyl/glutamyl-tRNA(Asn/Gln) amidotransferase subunit C (95 aa).

This sequence belongs to the GatC family. Heterotrimer of A, B and C subunits.

It carries out the reaction L-glutamyl-tRNA(Gln) + L-glutamine + ATP + H2O = L-glutaminyl-tRNA(Gln) + L-glutamate + ADP + phosphate + H(+). The enzyme catalyses L-aspartyl-tRNA(Asn) + L-glutamine + ATP + H2O = L-asparaginyl-tRNA(Asn) + L-glutamate + ADP + phosphate + 2 H(+). In terms of biological role, allows the formation of correctly charged Asn-tRNA(Asn) or Gln-tRNA(Gln) through the transamidation of misacylated Asp-tRNA(Asn) or Glu-tRNA(Gln) in organisms which lack either or both of asparaginyl-tRNA or glutaminyl-tRNA synthetases. The reaction takes place in the presence of glutamine and ATP through an activated phospho-Asp-tRNA(Asn) or phospho-Glu-tRNA(Gln). In Chloroherpeton thalassium (strain ATCC 35110 / GB-78), this protein is Aspartyl/glutamyl-tRNA(Asn/Gln) amidotransferase subunit C.